Reading from the N-terminus, the 1604-residue chain is Ubiquitin carboxyl-terminal hydrolase 32 (1604 aa).

EF-hand domains follow at residues lysine 91–lysine 126, isoleucine 228–glycine 263, and proline 264–valine 299. 9 residues coordinate Ca(2+): aspartate 241, asparagine 243, aspartate 245, histidine 247, glutamate 252, aspartate 277, aspartate 279, aspartate 281, and glutamate 288. The 217-residue stretch at alanine 369–isoleucine 585 folds into the DUSP domain. One can recognise a USP domain in the interval threonine 734–glutamine 1567. Cysteine 743 serves as the catalytic Nucleophile. At tyrosine 1173 the chain carries Phosphotyrosine. Serine 1350 bears the Phosphoserine mark. A disordered region spans residues glutamate 1353 to glutamate 1432. A compositionally biased stretch (polar residues) spans lysine 1360–threonine 1370. A compositionally biased stretch (low complexity) spans serine 1371–proline 1399. Residues serine 1372 and serine 1376 each carry the phosphoserine modification. A compositionally biased stretch (polar residues) spans glycine 1415–lysine 1424. Phosphoserine is present on serine 1454. Residues serine 1484–threonine 1504 form a disordered region. Positions histidine 1491–threonine 1504 are enriched in basic and acidic residues. Histidine 1526 acts as the Proton acceptor in catalysis. Phosphoserine is present on serine 1588. Cysteine methyl ester is present on cysteine 1601. Cysteine 1601 carries the S-farnesyl cysteine lipid modification. The propeptide at valine 1602–glutamine 1604 is removed in mature form.

This sequence belongs to the peptidase C19 family.

The protein resides in the golgi apparatus membrane. The enzyme catalyses Thiol-dependent hydrolysis of ester, thioester, amide, peptide and isopeptide bonds formed by the C-terminal Gly of ubiquitin (a 76-residue protein attached to proteins as an intracellular targeting signal).. In terms of biological role, deubiquitinase that can remove conjugated ubiquitin from target proteins, such as RAB7A and LAMTOR1. Acts as a positive regulator of the mTORC1 signaling by mediating deubiquitination of LAMTOR1, thereby promoting the association between LAMTOR1 and the lysosomal V-ATPase complex and subsequent activation of the mTORC1 complex. This Mus musculus (Mouse) protein is Ubiquitin carboxyl-terminal hydrolase 32.